The primary structure comprises 883 residues: Phosphoenolpyruvate carboxylase (883 aa).

Catalysis depends on residues His138 and Lys546.

This sequence belongs to the PEPCase type 1 family. Mg(2+) serves as cofactor.

The enzyme catalyses oxaloacetate + phosphate = phosphoenolpyruvate + hydrogencarbonate. Functionally, forms oxaloacetate, a four-carbon dicarboxylic acid source for the tricarboxylic acid cycle. The chain is Phosphoenolpyruvate carboxylase from Escherichia coli O127:H6 (strain E2348/69 / EPEC).